Consider the following 226-residue polypeptide: Orotidine 5'-phosphate decarboxylase (226 aa).

Residues D8, K30, 58–67, T117, R177, Q186, G206, and R207 contribute to the substrate site; that span reads DLKIHDIPNT. K60 acts as the Proton donor in catalysis.

Belongs to the OMP decarboxylase family. Type 1 subfamily. In terms of assembly, homodimer.

It catalyses the reaction orotidine 5'-phosphate + H(+) = UMP + CO2. It participates in pyrimidine metabolism; UMP biosynthesis via de novo pathway; UMP from orotate: step 2/2. Catalyzes the decarboxylation of orotidine 5'-monophosphate (OMP) to uridine 5'-monophosphate (UMP). This Campylobacter jejuni subsp. doylei (strain ATCC BAA-1458 / RM4099 / 269.97) protein is Orotidine 5'-phosphate decarboxylase.